We begin with the raw amino-acid sequence, 492 residues long: Cytochrome P450 2B12 (492 aa).

A Phosphoserine modification is found at Ser-129. Cys-437 provides a ligand contact to heme.

Belongs to the cytochrome P450 family. Heme serves as cofactor. As to expression, preputial gland, but not in liver.

Its subcellular location is the endoplasmic reticulum membrane. It localises to the microsome membrane. It carries out the reaction an organic molecule + reduced [NADPH--hemoprotein reductase] + O2 = an alcohol + oxidized [NADPH--hemoprotein reductase] + H2O + H(+). Its function is as follows. Cytochromes P450 are a group of heme-thiolate monooxygenases. In liver microsomes, this enzyme is involved in an NADPH-dependent electron transport pathway. This isozyme seems responsible for metabolism of 2,2',4,4',5,5'-hexachlorobiphenyl. The chain is Cytochrome P450 2B12 (Cyp2b12) from Rattus norvegicus (Rat).